The chain runs to 948 residues: Isoleucine--tRNA ligase (948 aa).

The 'HIGH' region signature appears at 58-68 (PYANGDIHIGH). Glu-566 provides a ligand contact to L-isoleucyl-5'-AMP. The 'KMSKS' region signature appears at 607-611 (KMSKS). Lys-610 lines the ATP pocket. Cys-911, Cys-914, Cys-931, and Cys-934 together coordinate Zn(2+).

This sequence belongs to the class-I aminoacyl-tRNA synthetase family. IleS type 1 subfamily. In terms of assembly, monomer. It depends on Zn(2+) as a cofactor.

The protein resides in the cytoplasm. It catalyses the reaction tRNA(Ile) + L-isoleucine + ATP = L-isoleucyl-tRNA(Ile) + AMP + diphosphate. Catalyzes the attachment of isoleucine to tRNA(Ile). As IleRS can inadvertently accommodate and process structurally similar amino acids such as valine, to avoid such errors it has two additional distinct tRNA(Ile)-dependent editing activities. One activity is designated as 'pretransfer' editing and involves the hydrolysis of activated Val-AMP. The other activity is designated 'posttransfer' editing and involves deacylation of mischarged Val-tRNA(Ile). The chain is Isoleucine--tRNA ligase from Vibrio vulnificus (strain YJ016).